Consider the following 122-residue polypeptide: Large ribosomal subunit protein uL14 (122 aa).

It belongs to the universal ribosomal protein uL14 family. Part of the 50S ribosomal subunit. Forms a cluster with proteins L3 and L19. In the 70S ribosome, L14 and L19 interact and together make contacts with the 16S rRNA in bridges B5 and B8.

In terms of biological role, binds to 23S rRNA. Forms part of two intersubunit bridges in the 70S ribosome. The chain is Large ribosomal subunit protein uL14 from Chloroflexus aggregans (strain MD-66 / DSM 9485).